Here is a 492-residue protein sequence, read N- to C-terminus: MANYFNTLNLRQQLAQLGKCRFMARDEFADEAGYLKGKKVVIVGCGAQGLNQGLNMRDSGLDVAYALRKEAIAEKRASWRKATENGFKVGTYEELIPQADLVVNLTPDKQHSAVVKAVQPLMKEGAALGYSHGFNIVEVGEQVRKDITVVMVAPKCPGTEVREEYKRGFGVPTLIAVHPENDPKGEGMAIAKAWAAATGGHRAGVLEFSFVAEVKSDLMGEQTILCGMLQAGSLLCFDKLVSEGTDAAYAEKLIQFGWETITEALKQGGITLMMDRLSNPAKLRAYALSEQLKEIMAPLFQKHMDDIISGAFSSGMMADWANDDVKLLNWREETGRTAFENAPQFEGKISEQEYFDHGVLMIAMVKAGVELAFETMVDSGIIEESAYYESLHELPLIANTIARKRLYEMNVVISDTAEYGNYLFANAAVPLLKEKFMDSLQAGDLGKSIPGSAVDNAQLRDVNEAIRNHPIEAVGHKLRGYMTDMKRIAVAG.

The KARI N-terminal Rossmann domain occupies 15–208; that stretch reads AQLGKCRFMA…GGHRAGVLEF (194 aa). NADP(+) is bound by residues 45-48, arginine 68, arginine 76, serine 78, and 108-110; these read CGAQ and DKQ. Histidine 132 is an active-site residue. Position 158 (glycine 158) interacts with NADP(+). KARI C-terminal knotted domains follow at residues 209 to 344 and 345 to 485; these read SFVA…NAPQ and FEGK…MTDM. Residues aspartate 217, glutamate 221, glutamate 389, and glutamate 393 each coordinate Mg(2+). Substrate is bound at residue serine 414.

This sequence belongs to the ketol-acid reductoisomerase family. It depends on Mg(2+) as a cofactor.

The enzyme catalyses (2R)-2,3-dihydroxy-3-methylbutanoate + NADP(+) = (2S)-2-acetolactate + NADPH + H(+). The catalysed reaction is (2R,3R)-2,3-dihydroxy-3-methylpentanoate + NADP(+) = (S)-2-ethyl-2-hydroxy-3-oxobutanoate + NADPH + H(+). Its pathway is amino-acid biosynthesis; L-isoleucine biosynthesis; L-isoleucine from 2-oxobutanoate: step 2/4. It functions in the pathway amino-acid biosynthesis; L-valine biosynthesis; L-valine from pyruvate: step 2/4. Its function is as follows. Involved in the biosynthesis of branched-chain amino acids (BCAA). Catalyzes an alkyl-migration followed by a ketol-acid reduction of (S)-2-acetolactate (S2AL) to yield (R)-2,3-dihydroxy-isovalerate. In the isomerase reaction, S2AL is rearranged via a Mg-dependent methyl migration to produce 3-hydroxy-3-methyl-2-ketobutyrate (HMKB). In the reductase reaction, this 2-ketoacid undergoes a metal-dependent reduction by NADPH to yield (R)-2,3-dihydroxy-isovalerate. The sequence is that of Ketol-acid reductoisomerase (NADP(+)) from Yersinia pestis bv. Antiqua (strain Antiqua).